Reading from the N-terminus, the 328-residue chain is Putative lipase LIH1 (328 aa).

The Nucleophile role is filled by Ser181. Catalysis depends on charge relay system residues Asp253 and His315.

Belongs to the AB hydrolase superfamily. Lipase family.

The enzyme catalyses a triacylglycerol + H2O = a diacylglycerol + a fatty acid + H(+). Its function is as follows. Lipases catalyze the hydrolysis of the ester bond of tri-, di- and monoglycerides of long-chain fatty acids into fatty acids and glycerol. The sequence is that of Putative lipase LIH1 from Saccharomyces cerevisiae (strain ATCC 204508 / S288c) (Baker's yeast).